The following is a 354-amino-acid chain: Serum paraoxonase/arylesterase 2 (354 aa).

C42 and C352 are joined by a disulfide. Residues E53 and D54 each contribute to the Ca(2+) site. The active-site Proton acceptor is the H114. Positions 116, 167, 168, and 223 each coordinate Ca(2+). A glycan (N-linked (GlcNAc...) asparagine) is linked at N254. 2 residues coordinate Ca(2+): D268 and N269. 2 N-linked (GlcNAc...) asparagine glycosylation sites follow: N269 and N323.

Belongs to the paraoxonase family. In terms of assembly, homotrimer. Ca(2+) is required as a cofactor. Glycosylated. In terms of processing, the signal sequence is not cleaved.

It is found in the membrane. It catalyses the reaction a phenyl acetate + H2O = a phenol + acetate + H(+). The catalysed reaction is an N-acyl-L-homoserine lactone + H2O = an N-acyl-L-homoserine + H(+). In terms of biological role, capable of hydrolyzing lactones and a number of aromatic carboxylic acid esters. This chain is Serum paraoxonase/arylesterase 2 (PON2), found in Bos taurus (Bovine).